We begin with the raw amino-acid sequence, 451 residues long: Bifunctional protein GlmU (451 aa).

Residues 1 to 231 (MDSPLAIIVL…ADEVAGINSR (231 aa)) form a pyrophosphorylase region. UDP-N-acetyl-alpha-D-glucosamine-binding positions include 10-13 (LAAG), Lys24, Gln74, 79-80 (GT), 102-104 (YGD), Gly142, Glu156, Asn171, and Asn229. Asp104 serves as a coordination point for Mg(2+). Asn229 contacts Mg(2+). The interval 232–252 (GELAEAEGRWQQRRRAAAMAD) is linker. The N-acetyltransferase stretch occupies residues 253 to 451 (GASLIAPETV…MKKKKAEKKS (199 aa)). UDP-N-acetyl-alpha-D-glucosamine is bound by residues Arg318 and Lys336. The active-site Proton acceptor is the His348. UDP-N-acetyl-alpha-D-glucosamine-binding residues include Tyr351 and Asn362. Acetyl-CoA-binding positions include Ala365, 371–372 (NY), Ser390, Ala408, and Arg425.

It in the N-terminal section; belongs to the N-acetylglucosamine-1-phosphate uridyltransferase family. This sequence in the C-terminal section; belongs to the transferase hexapeptide repeat family. In terms of assembly, homotrimer. The cofactor is Mg(2+).

The protein resides in the cytoplasm. The enzyme catalyses alpha-D-glucosamine 1-phosphate + acetyl-CoA = N-acetyl-alpha-D-glucosamine 1-phosphate + CoA + H(+). The catalysed reaction is N-acetyl-alpha-D-glucosamine 1-phosphate + UTP + H(+) = UDP-N-acetyl-alpha-D-glucosamine + diphosphate. The protein operates within nucleotide-sugar biosynthesis; UDP-N-acetyl-alpha-D-glucosamine biosynthesis; N-acetyl-alpha-D-glucosamine 1-phosphate from alpha-D-glucosamine 6-phosphate (route II): step 2/2. Its pathway is nucleotide-sugar biosynthesis; UDP-N-acetyl-alpha-D-glucosamine biosynthesis; UDP-N-acetyl-alpha-D-glucosamine from N-acetyl-alpha-D-glucosamine 1-phosphate: step 1/1. It participates in bacterial outer membrane biogenesis; LPS lipid A biosynthesis. Catalyzes the last two sequential reactions in the de novo biosynthetic pathway for UDP-N-acetylglucosamine (UDP-GlcNAc). The C-terminal domain catalyzes the transfer of acetyl group from acetyl coenzyme A to glucosamine-1-phosphate (GlcN-1-P) to produce N-acetylglucosamine-1-phosphate (GlcNAc-1-P), which is converted into UDP-GlcNAc by the transfer of uridine 5-monophosphate (from uridine 5-triphosphate), a reaction catalyzed by the N-terminal domain. This chain is Bifunctional protein GlmU, found in Novosphingobium aromaticivorans (strain ATCC 700278 / DSM 12444 / CCUG 56034 / CIP 105152 / NBRC 16084 / F199).